A 352-amino-acid chain; its full sequence is MTFIMTSLQTPAVPEHSLDRDCTTLSRHVLQQLQSFSPEAQDLSAIMNRIALAGKLVARRLSRAGLMADVLGFTGETNVQGESVKKMDVYANDVFISVFKQSGLVCRLASEEMDKPYYIPENCPIGRYTLLYDPIDGSSNVDINLNVGSIFAIRQQKEDDLDGEGNDLLKDGREQIAAGYIVYGPSTMLVYSIGHGVHSFLLDPSLGEFILAQENIQIPDHGPVYSTNEGNFWQWDDAIRDYTRYVHRHEGYTARYSGALVGDIHRILMQGGVFLYPGTVKKPEGKLRLLYESAPLAFLVEQAGGKASNGLKPILDVVPDKLHARSPLVIGSKEDVSLVESFIQDHQHRNHG.

Residues glutamate 111, aspartate 133, isoleucine 135, and aspartate 136 each contribute to the Mg(2+) site. Substrate is bound by residues 136-139 (DGSS), asparagine 228, tyrosine 256, and lysine 286. Glutamate 292 contacts Mg(2+).

Belongs to the FBPase class 1 family. In terms of assembly, homotetramer. Mg(2+) is required as a cofactor.

The protein resides in the cytoplasm. It carries out the reaction beta-D-fructose 1,6-bisphosphate + H2O = beta-D-fructose 6-phosphate + phosphate. It participates in carbohydrate biosynthesis; Calvin cycle. The chain is Fructose-1,6-bisphosphatase class 1 from Crocosphaera subtropica (strain ATCC 51142 / BH68) (Cyanothece sp. (strain ATCC 51142)).